The chain runs to 1125 residues: tRNA (34-2'-O)-methyltransferase regulator WDR6 (1125 aa).

M1 is subject to N-acetylmethionine. WD repeat units lie at residues 53–97, 105–143, 147–189, 200–238, 247–285, 289–327, 335–376, 381–422, 425–470, 476–520, 559–598, 604–642, 645–684, 739–785, 848–897, 905–950, 974–1016, 1040–1077, and 1083–1125; these read VKRV…VVKV, RELWRSGLWNMSDWIWDVRWIEGNVAVALGHNSVVLYDP, CMLQ…IWYP, APDRRVSGHVGVIFSMSYLESKGLLATASEDRSVRLWKV, RVQNIGHCFGHSARVWQVKLLENYLISAGEDCVCLVWSH, ILQAFRGHRGRGIRAIATHERQAWVVTGGDDSGIRLWHL, LGVS…LYDL, WEQL…VVPI, PTAA…ISAA, IFVK…LFPV, PVSTLHSLHGKQGVTSVTCHGGYLYSTGRDSSYFQLFVHG, VLRQKACRGMNWVAGLRMVPDGSMVILGFHANEFVVWSP, HEKLHIVNCGGGHRSWAFSDTEAAMAFTYLKDGEVMLYRA, LIDI…VWAV, RNKH…LFLL, HLLA…FWDL, GTPS…VFTL, EEYSVPCAHAAHVTGVKILSPKLMVSASIDQRLTFWRL, and TFMN…NWYD.

This sequence belongs to the WD repeat WDR6 family. Interacts with FTSJ1; the interaction is direct, and required for 2'-O-methylation of position 34 in substrate tRNAs. Interacts with IRS4. Interacts with STK11/LKB1.

It localises to the cytoplasm. Together with methyltransferase FTSJ1, methylates the 2'-O-ribose of nucleotides at position 34 of the tRNA anticodon loop of substrate tRNAs. Required for the correct positioning of the substrate tRNA for methylation. Required to suppress amino acid starvation-induced autophagy. Enhances the STK11/LKB1-induced cell growth suppression activity. This Mus musculus (Mouse) protein is tRNA (34-2'-O)-methyltransferase regulator WDR6 (Wdr6).